We begin with the raw amino-acid sequence, 216 residues long: Large ribosomal subunit protein uL3 (216 aa).

The disordered stretch occupies residues 135 to 156 (LGASHGTQRKHRSPGSIGGCAT).

This sequence belongs to the universal ribosomal protein uL3 family. As to quaternary structure, part of the 50S ribosomal subunit. Forms a cluster with proteins L14 and L19.

One of the primary rRNA binding proteins, it binds directly near the 3'-end of the 23S rRNA, where it nucleates assembly of the 50S subunit. The polypeptide is Large ribosomal subunit protein uL3 (Thermobifida fusca (strain YX)).